We begin with the raw amino-acid sequence, 273 residues long: MADTQAMASDRGVAVTLPQKRYYRQRAHSNPMADHTFQYPVKPEVMDWSEYYPEFFKPLVPDCAHDDAKDLQERKEQHQVEFADVGCGYGGLLVALSPLFPNTLMLGLEIRVKVSDYVQDRIKSLRASHLGQYQNIACIRSNAMKYLPNFFKKGQLSKMFFLFPDPHFKKTKHKWRIISPTLLAEYSYALRVGGMVYTITDVEEVHEWMVKHFTEHPLFERVEKEELVSDIIVDKLGTSTEEGKKVQRNKGQNFLAVFRRIENRTFIQRDSQQ.

The S-adenosyl-L-methionine site is built by Gly-86, Glu-109, Arg-111, Asn-142, Ala-143, and Leu-162. Asp-165 is an active-site residue. The segment at 166–174 is alphaC helix; it reads PHFKKTKHK. Thr-240 and Glu-242 together coordinate S-adenosyl-L-methionine. The tract at residues 240 to 248 is alpha6 helix; the sequence is TEEGKKVQR.

Belongs to the class I-like SAM-binding methyltransferase superfamily. TrmB family. As to quaternary structure, catalytic component of the METTL1-WDR4 complex, composed of mettl1 and wdr4.

The protein resides in the nucleus. The enzyme catalyses guanosine(46) in tRNA + S-adenosyl-L-methionine = N(7)-methylguanosine(46) in tRNA + S-adenosyl-L-homocysteine. It carries out the reaction a guanosine in mRNA + S-adenosyl-L-methionine = an N(7)-methylguanosine in mRNA + S-adenosyl-L-homocysteine. The catalysed reaction is a guanosine in miRNA + S-adenosyl-L-methionine = an N(7)-methylguanosine in miRNA + S-adenosyl-L-homocysteine. It functions in the pathway tRNA modification; N(7)-methylguanine-tRNA biosynthesis. In terms of biological role, catalytic component of METTL1-WDR4 methyltransferase complex that mediates the formation of N(7)-methylguanine in a subset of RNA species, such as tRNAs, mRNAs and microRNAs (miRNAs). Catalyzes the formation of N(7)-methylguanine at position 46 (m7G46) in a large subset of tRNAs that contain the 5'-RAGGU-3' motif within the variable loop. M7G46 interacts with C13-G22 in the D-loop to stabilize tRNA tertiary structure and protect tRNAs from decay. Also acts as a methyltransferase for a subset of internal N(7)-methylguanine in mRNAs. Internal N(7)-methylguanine methylation of mRNAs in response to stress promotes their relocalization to stress granules, thereby suppressing their translation. Also methylates a specific subset of miRNAs. In Xenopus laevis (African clawed frog), this protein is tRNA (guanine-N(7)-)-methyltransferase (mettl1).